We begin with the raw amino-acid sequence, 77 residues long: U14-theraphotoxin-Cg1a 3 (77 aa).

An N-terminal signal peptide occupies residues 1-21 (MKTSVLLVILGIAAITVQCTA). Residues 22–49 (SESVEQDSLRTFVDTVLGWNAEMASEAR) constitute a propeptide that is removed on maturation. 3 cysteine pairs are disulfide-bonded: Cys-50–Cys-64, Cys-57–Cys-69, and Cys-63–Cys-75. Residue Lys-77 is modified to Lysine amide.

This sequence belongs to the neurotoxin 10 (Hwtx-1) family. 65 (Jztx-21) subfamily. Expressed by the venom gland.

The protein resides in the secreted. Functionally, probable ion channel inhibitor. The sequence is that of U14-theraphotoxin-Cg1a 3 from Chilobrachys guangxiensis (Chinese earth tiger tarantula).